Consider the following 359-residue polypeptide: Alpha-ketoglutarate-dependent dioxygenase cnsM (359 aa).

His120 contributes to the substrate binding site. Residues His158 and Asp160 each coordinate Fe cation. Thr186 contacts 2-oxoglutarate. Residue His311 participates in Fe cation binding. Residues Arg323 and Arg327 each contribute to the 2-oxoglutarate site. Arg327 contributes to the substrate binding site.

This sequence belongs to the TfdA dioxygenase family. The cofactor is Fe(2+).

The protein operates within alkaloid biosynthesis. In terms of biological role, alpha-ketoglutarate-dependent dioxygenase; part of the gene cluster that mediates the biosynthesis of communesins, a prominent class of indole alkaloids with great potential as pharmaceuticals. Communesins are biosynthesized by the coupling of tryptamine and aurantioclavine, two building blocks derived from L-tryptophan. The L-tryptophan decarboxylase cnsB converts L-tryptophan to tryptamine, whereas the tryptophan dimethylallyltransferase cnsF converts L-tryptophan to 4-dimethylallyl tryptophan which is further transformed to aurantioclavine by the aurantioclavine synthase cnsA, probably aided by the catalase cnsD. The cytochrome P450 monooxygenase cnsC catalyzes the heterodimeric coupling between the two different indole moieties, tryptamine and aurantioclavine, to construct vicinal quaternary stereocenters and yield the heptacyclic communesin scaffold. The O-methyltransferase cnsE then methylates the communesin scaffold to produce communesin K, the simplest characterized communesin that contains the heptacyclic core. The dioxygenase cnsJ converts communesin K into communesin I. Acylation to introduce the hexadienyl group at position N16 of communesin I by the acyltransferase cnsK leads to the production of communesin B. The hexadienyl group is produced by the highly reducing polyketide synthase cnsI, before being hydrolytically removed from cnsI by the serine hydrolase cnsH, converted into hexadienyl-CoA by the CoA ligase cnsG, and then transferred to communesin I by cnsK. Surprisingly, cnsK may also be a promiscuous acyltransferase that can tolerate a range of acyl groups, including acetyl-, propionyl-, and butyryl-CoA, which lead to communesins A, G and H respectively. The roles of the alpha-ketoglutarate-dependent dioxygenases cnsM and cnsP have still to be determined. The polypeptide is Alpha-ketoglutarate-dependent dioxygenase cnsM (Penicillium expansum (Blue mold rot fungus)).